A 291-amino-acid polypeptide reads, in one-letter code: Pentonolactonase XacC (291 aa).

A divalent metal cation is bound by residues Glu-15, Asn-141, and Asp-191. Asp-191 serves as the catalytic Proton donor/acceptor.

This sequence belongs to the SMP-30/CGR1 family. In terms of assembly, monomer. It depends on a divalent metal cation as a cofactor.

The catalysed reaction is L-arabinono-1,4-lactone + H2O = L-arabinonate + H(+). The enzyme catalyses D-xylono-1,4-lactone + H2O = D-xylonate + H(+). Its pathway is carbohydrate degradation. In terms of biological role, pentonolactonase involved in D-arabinose and D-xylose catabolism. Catalyzes the hydrolysis of both L-arabino-gamma-lactone and D-xylono-gamma-lactone to the corresponding acids. Can also hydrolyze D-galactono-gamma-lactone and D-glucono-delta-lactone. The polypeptide is Pentonolactonase XacC (Haloferax volcanii (strain ATCC 29605 / DSM 3757 / JCM 8879 / NBRC 14742 / NCIMB 2012 / VKM B-1768 / DS2) (Halobacterium volcanii)).